A 276-amino-acid polypeptide reads, in one-letter code: Diacetylchitobiose uptake system permease protein DasC (276 aa).

6 consecutive transmembrane segments (helical) span residues 14–34 (TAVV…ATAF), 74–94 (LIVT…GSFA), 105–125 (GFIV…VIAI), 137–157 (SLVP…ILTL), 186–206 (VILP…FITA), and 241–261 (GATM…FVYL). The ABC transmembrane type-1 domain occupies 70–261 (VSNSLIVTVC…IPILILFVYL (192 aa)).

It belongs to the binding-protein-dependent transport system permease family. As to quaternary structure, the complex is composed of two ATP-binding proteins (MsiK), two transmembrane proteins (DasB and DasC) and a solute-binding protein (DasA).

The protein localises to the cell membrane. Functionally, part of the ABC transporter complex DasABC-MsiK involved in N,N'-diacetylchitobiose ((GlcNAc)2) uptake. Responsible for the translocation of the substrate across the membrane. The polypeptide is Diacetylchitobiose uptake system permease protein DasC (Streptomyces coelicolor (strain ATCC BAA-471 / A3(2) / M145)).